A 68-amino-acid polypeptide reads, in one-letter code: Molybdenum-pterin-binding protein 2 (68 aa).

One can recognise a Mop domain in the interval 2-68; the sequence is SISARNQLKG…VKSTDVMILA (67 aa).

Its function is as follows. Binds one mole of molybdenum per mole of protein and contains a pterin. The polypeptide is Molybdenum-pterin-binding protein 2 (mopII) (Clostridium pasteurianum).